The primary structure comprises 315 residues: DNA-directed RNA polymerase subunit alpha (315 aa).

Residues 1–228 (MIGMEKPKIE…EHLELFISLT (228 aa)) form an alpha N-terminal domain (alpha-NTD) region. The interval 245–315 (RNKLMEMTIE…FGLSLRQPDD (71 aa)) is alpha C-terminal domain (alpha-CTD).

The protein belongs to the RNA polymerase alpha chain family. As to quaternary structure, homodimer. The RNAP catalytic core consists of 2 alpha, 1 beta, 1 beta' and 1 omega subunit. When a sigma factor is associated with the core the holoenzyme is formed, which can initiate transcription.

The catalysed reaction is RNA(n) + a ribonucleoside 5'-triphosphate = RNA(n+1) + diphosphate. DNA-dependent RNA polymerase catalyzes the transcription of DNA into RNA using the four ribonucleoside triphosphates as substrates. This is DNA-directed RNA polymerase subunit alpha from Symbiobacterium thermophilum (strain DSM 24528 / JCM 14929 / IAM 14863 / T).